Reading from the N-terminus, the 186-residue chain is Phosphopantetheine adenylyltransferase (186 aa).

Thr14 serves as a coordination point for substrate. Residues 14–15 (TF) and His22 each bind ATP. Lys46, Leu78, and Arg92 together coordinate substrate. ATP-binding positions include 93-95 (GLR), Glu103, and 128-134 (WLYISST).

It belongs to the bacterial CoaD family. Homohexamer. Mg(2+) serves as cofactor.

The protein localises to the cytoplasm. It carries out the reaction (R)-4'-phosphopantetheine + ATP + H(+) = 3'-dephospho-CoA + diphosphate. It functions in the pathway cofactor biosynthesis; coenzyme A biosynthesis; CoA from (R)-pantothenate: step 4/5. Reversibly transfers an adenylyl group from ATP to 4'-phosphopantetheine, yielding dephospho-CoA (dPCoA) and pyrophosphate. The chain is Phosphopantetheine adenylyltransferase from Nitratidesulfovibrio vulgaris (strain ATCC 29579 / DSM 644 / CCUG 34227 / NCIMB 8303 / VKM B-1760 / Hildenborough) (Desulfovibrio vulgaris).